The chain runs to 379 residues: Cytochrome b (379 aa).

Helical transmembrane passes span 33 to 53 (FGSL…FLAM), 77 to 98 (WLIR…FIHV), 113 to 133 (WNIG…GYVL), and 178 to 198 (FFAF…VHLL). 2 residues coordinate heme b: His83 and His97. Positions 182 and 196 each coordinate heme b. His201 lines the a ubiquinone pocket. 4 consecutive transmembrane segments (helical) span residues 226 to 246 (IKDL…ALFF), 288 to 308 (LGGV…PLLN), 320 to 340 (ITQT…WIGG), and 347 to 367 (FTTI…ILMP).

This sequence belongs to the cytochrome b family. As to quaternary structure, the cytochrome bc1 complex contains 11 subunits: 3 respiratory subunits (MT-CYB, CYC1 and UQCRFS1), 2 core proteins (UQCRC1 and UQCRC2) and 6 low-molecular weight proteins (UQCRH/QCR6, UQCRB/QCR7, UQCRQ/QCR8, UQCR10/QCR9, UQCR11/QCR10 and a cleavage product of UQCRFS1). This cytochrome bc1 complex then forms a dimer. It depends on heme b as a cofactor.

Its subcellular location is the mitochondrion inner membrane. In terms of biological role, component of the ubiquinol-cytochrome c reductase complex (complex III or cytochrome b-c1 complex) that is part of the mitochondrial respiratory chain. The b-c1 complex mediates electron transfer from ubiquinol to cytochrome c. Contributes to the generation of a proton gradient across the mitochondrial membrane that is then used for ATP synthesis. The protein is Cytochrome b (MT-CYB) of Akodon affinis (Colombian grass mouse).